The primary structure comprises 285 residues: tRNA-cytidine(32) 2-sulfurtransferase (285 aa).

Residues 49–54 carry the PP-loop motif motif; it reads SGGKDS. Positions 124, 127, and 215 each coordinate [4Fe-4S] cluster.

This sequence belongs to the TtcA family. Homodimer. It depends on Mg(2+) as a cofactor. [4Fe-4S] cluster is required as a cofactor.

The protein localises to the cytoplasm. It carries out the reaction cytidine(32) in tRNA + S-sulfanyl-L-cysteinyl-[cysteine desulfurase] + AH2 + ATP = 2-thiocytidine(32) in tRNA + L-cysteinyl-[cysteine desulfurase] + A + AMP + diphosphate + H(+). The protein operates within tRNA modification. In terms of biological role, catalyzes the ATP-dependent 2-thiolation of cytidine in position 32 of tRNA, to form 2-thiocytidine (s(2)C32). The sulfur atoms are provided by the cysteine/cysteine desulfurase (IscS) system. The chain is tRNA-cytidine(32) 2-sulfurtransferase from Hahella chejuensis (strain KCTC 2396).